A 65-amino-acid polypeptide reads, in one-letter code: uncharacterized protein (65 aa).

2 helical membrane-spanning segments follow: residues 12–31 (IVKW…LIVV) and 41–63 (LVAR…AIIV).

The protein resides in the cell membrane. This is an uncharacterized protein from Halalkalibacterium halodurans (strain ATCC BAA-125 / DSM 18197 / FERM 7344 / JCM 9153 / C-125) (Bacillus halodurans).